The sequence spans 434 residues: Zinc finger protein kipf (434 aa).

The region spanning 7-88 is the ZAD domain; that stretch reads NVCRTCMDET…EQSYQHFFRV (82 aa). Positions 9, 12, 61, and 64 each coordinate Zn(2+). A disordered region spans residues 117–173; it reads QLKSDRQQDTQQMTKTQKPDDDLSQKQTLQAKLQEGNIDGPPESFTLHPRKRTCRTE. A C2H2-type 1; degenerate zinc finger spans residues 197–219; it reads YNCPHCSKRFCSQTQLRTHITDL. C2H2-type zinc fingers lie at residues 221–243, 249–271, and 277–299; these read NRCP…LRNH, HKCF…LRTH, and LSCS…RREH. Residues 295-328 are disordered; sequence HRREHKQRPGSSKSESTKDPDSDDSDQAQDLKPK. A phosphoserine mark is found at Ser-316 and Ser-319. C2H2-type zinc fingers lie at residues 348–370, 377–399, and 404–427; these read PICD…MLTH, KKCT…ERGH, and FRCE…KRIH.

Homodimer; mediated by the ZAD domain. Interacts (via C2H2 type zinc finger 4) with rhi/rhino (via Chromo domain). Dimerization is required for association with DNA and interaction with rhi/rhino. In terms of tissue distribution, primarily expressed in ovaries and absent from testes. In ovaries very low levels in germline stem cells and cystoblasts but abundant in developing cysts and polyploid nurse cells.

The protein localises to the nucleus. The protein resides in the chromosome. Its function is as follows. DNA-binding zinc finger protein that recruits chromo domain protein rhino/rhi to specific chromatin regions enriched in H3K9me2/3 histone methylation, mediating piRNA (piwi-interacting RNA) biogenesis. May bind to GC rich DNA sequences including a 5'-GRGGN-3' sequence motif. Nucleates rhi/rhino accumulation and stabilizes its expansion. Involved in piRNA transposon repression, particularly in the female ovary during oogenesis. The protein is Zinc finger protein kipf of Drosophila melanogaster (Fruit fly).